The sequence spans 460 residues: Argininosuccinate lyase (460 aa).

The protein belongs to the lyase 1 family. Argininosuccinate lyase subfamily.

The protein resides in the cytoplasm. It catalyses the reaction 2-(N(omega)-L-arginino)succinate = fumarate + L-arginine. It functions in the pathway amino-acid biosynthesis; L-arginine biosynthesis; L-arginine from L-ornithine and carbamoyl phosphate: step 3/3. In Edwardsiella ictaluri (strain 93-146), this protein is Argininosuccinate lyase.